A 123-amino-acid chain; its full sequence is Protein LLP homolog (123 aa).

Over residues 1–21 (MAKSLRSKWKRKMRAEKRKKN) the composition is skewed to basic residues. Disordered stretches follow at residues 1–22 (MAKSLRSKWKRKMRAEKRKKNA) and 61–123 (DLDV…KLAW). Residues 70–89 (ESSKMDTELKRNKKNLRDQH) show a composition bias toward basic and acidic residues. Over residues 100–123 (QQKKLKSQCGKKKGKSKQAKKLAW) the composition is skewed to basic residues.

It belongs to the learning-associated protein family.

The protein resides in the nucleus. It is found in the nucleolus. It localises to the chromosome. In terms of biological role, regulates dendritic and spine growth and synaptic transmission. The sequence is that of Protein LLP homolog (llph) from Xenopus laevis (African clawed frog).